A 592-amino-acid chain; its full sequence is N-acetyltransferase ESCO2 (592 aa).

Residues Ser41 and Ser85 each carry the phosphoserine modification. A disordered region spans residues 267–294; sequence KSSVKVQNARSKNEEKLRKNPSGAVVSS. At Ser309 the chain carries Phosphoserine. The CCHH-type zinc finger occupies 384–408; the sequence is TVCKSCGMIYTASNPEDEIQHLQHH.

It belongs to the acetyltransferase family. ECO subfamily.

Its subcellular location is the nucleus. It is found in the chromosome. It carries out the reaction L-lysyl-[protein] + acetyl-CoA = N(6)-acetyl-L-lysyl-[protein] + CoA + H(+). Acetyltransferase required for the establishment of sister chromatid cohesion. Couples the processes of cohesion and DNA replication to ensure that only sister chromatids become paired together. In contrast to the structural cohesins, the deposition and establishment factors are required only during the S phase. Acetylates the cohesin component SMC3. The sequence is that of N-acetyltransferase ESCO2 (Esco2) from Mus musculus (Mouse).